A 534-amino-acid polypeptide reads, in one-letter code: Protein tweety homolog 2 (534 aa).

The Extracellular segment spans residues 1-44; sequence MATARVEYIAPWWVYWLHNLPHVDFSLQRESGDFNPKDPGYQQT. The helical transmembrane segment at 45–65 threads the bilayer; that stretch reads LLFVALFIALCAAVNLLFVSG. The Cytoplasmic portion of the chain corresponds to 66-87; that stretch reads YLICLCCCKKEDETETKMTSSC. A helical transmembrane segment spans residues 88–108; sequence CVTWTAAVSGLLCCAAVGIGF. At 109–213 the chain is on the extracellular side; the sequence is YGNSETNDGV…NASIIEYYRW (105 aa). 2 residues coordinate Ca(2+): Glu-113 and Asp-116. N-linked (GlcNAc...) asparagine glycosylation is present at Asn-129. The RGD signature appears at 164 to 166; it reads RGD. N-linked (GlcNAc...) asparagine glycans are attached at residues Asn-197 and Asn-204. Residues 214-234 form a helical membrane-spanning segment; the sequence is LSYLILFITDVVICLVTCLGL. Residues 235 to 240 lie on the Cytoplasmic side of the membrane; it reads AKKSKC. Residues 241 to 261 form a helical membrane-spanning segment; that stretch reads LLLTMLCCGLIALMLSWASLA. At 262-388 the chain is on the extracellular side; that stretch reads LETSSAVGTS…IGICYDGVEG (127 aa). Disulfide bonds link Cys-274–Cys-382 and Cys-300–Cys-367. N-linked (GlcNAc...) asparagine glycosylation is present at Asn-352. A helical transmembrane segment spans residues 389–409; that stretch reads LLYLSLFSLLAAVAFTAMVCA. Residues 410 to 534 lie on the Cytoplasmic side of the membrane; it reads MPRAWKHLAA…PNIYSNVFPA (125 aa).

This sequence belongs to the tweety family. As to quaternary structure, forms cis-homodimers in the presence of Ca(+2) and forms monomers and trans-dimers in the absence of Ca(2+).

It is found in the cell membrane. It catalyses the reaction chloride(in) = chloride(out). The catalysed reaction is L-glutamate(out) = L-glutamate(in). In terms of biological role, may act as a calcium-independent, swelling-dependent volume-regulated anion channel (VRAC-swell) which plays a pivotal role in the process of regulatory volume decrease (RVD) in the brain through the efflux of anions like chloride and organic osmolytes like glutamate. Probable large-conductance Ca(2+)-activated chloride channel. The protein is Protein tweety homolog 2 (ttyh2) of Xenopus laevis (African clawed frog).